A 357-amino-acid chain; its full sequence is Alternative oxidase, mitochondrial (357 aa).

The chain crosses the membrane as a helical span at residues 152 to 172 (LTRCIFLESIAGVPGAVASFI). The Fe cation site is built by glutamate 159, glutamate 198, and histidine 201. The helical transmembrane segment at 218–238 (IIYVGQGVFCNLFFLFYLANP) threads the bilayer. The Fe cation site is built by glutamate 249, glutamate 304, and histidine 307. Residues 330 to 357 (IPDLKEPQPESGLKVTKPHGWEKEELKL) are disordered. Residues 348-357 (HGWEKEELKL) show a composition bias toward basic and acidic residues.

The protein belongs to the alternative oxidase family. The cofactor is Fe cation.

The protein localises to the mitochondrion inner membrane. Its function is as follows. Catalyzes cyanide-resistant oxygen consumption. May increase respiration when the cytochrome respiratory pathway is restricted, or in response to low temperatures. This Scheffersomyces stipitis (strain ATCC 58785 / CBS 6054 / NBRC 10063 / NRRL Y-11545) (Yeast) protein is Alternative oxidase, mitochondrial (STO1).